The following is a 188-amino-acid chain: Elongation factor P (188 aa).

This sequence belongs to the elongation factor P family.

It localises to the cytoplasm. It functions in the pathway protein biosynthesis; polypeptide chain elongation. Involved in peptide bond synthesis. Stimulates efficient translation and peptide-bond synthesis on native or reconstituted 70S ribosomes in vitro. Probably functions indirectly by altering the affinity of the ribosome for aminoacyl-tRNA, thus increasing their reactivity as acceptors for peptidyl transferase. The chain is Elongation factor P from Mycoplasmoides gallisepticum (strain R(low / passage 15 / clone 2)) (Mycoplasma gallisepticum).